A 463-amino-acid polypeptide reads, in one-letter code: Lipase 5 (463 aa).

The signal sequence occupies residues 1–14 (MLYLILFLIAPIYA). Residues Cys110 and Cys281 are joined by a disulfide bond. The active-site Charge relay system is Ser194. Asn229 is a glycosylation site (N-linked (GlcNAc...) asparagine). Active-site charge relay system residues include Asp343 and His376. A disulfide bridge connects residues Cys359 and Cys404.

Belongs to the AB hydrolase superfamily. Lipase family. Class Lip subfamily.

It localises to the secreted. It carries out the reaction a triacylglycerol + H2O = a diacylglycerol + a fatty acid + H(+). With respect to regulation, fe(2)+, Fe(3+), Hg(2+) as well as ethylenediaminetetraacetic acid (EDTA) and phenylmethanesulfonyl fluoride (PMSF) strongly inhibit the lipase activity. Surfactants such as Tween 20, Tween 80 and TritonX-100 show also inhibitory effect in the lipase activity. Sodium dodecyl sulfate (SDS) sharply decreases the lipase activity by 85%. Methanol, ethanol, and acetone have also negative effect on the lipase activity, with residual activities at 48%, 24% and 44% respectively. Finally, lipase activity is almost lost in the presence of isopropanol alcohol. Functionally, secreted lipase that is able to hydrolyze both the neutral triacylglycerols and the monopalmitate ester Tween 40, allowing the use of hydrolyzed products as carbon sources. Exhibits a preference for the short and medium chain length p-NP (C4 and C8 acyl group) esters rather than the long chain length p-NP esters (C12, C16 and C18 acyl group). Has broad lipolytic activity, which may be important for colonization and subsequent infection, therefore contributing to the persistence and virulence in human tissue. The protein is Lipase 5 of Candida albicans (strain SC5314 / ATCC MYA-2876) (Yeast).